The sequence spans 545 residues: Calcium-dependent protein kinase 6 (545 aa).

The N-myristoyl glycine moiety is linked to residue G2. Residues 34 to 43 are compositionally biased toward low complexity; it reads CSSTSTATSS. The interval 34 to 58 is disordered; that stretch reads CSSTSTATSSGGRMPIRSHQQRLSS. Residues 74–332 enclose the Protein kinase domain; it reads YTVGRKLGQG…AHQVLCHPWV (259 aa). ATP contacts are provided by residues 80-88 and K103; that span reads LGQGQFGTT. D198 acts as the Proton acceptor in catalysis. The segment at 338-368 is autoinhibitory domain; the sequence is APDRPLAPAVLSRLKQFSAMNRLKKMALRVI. EF-hand domains lie at 375–410, 411–446, 447–482, and 486–516; these read EELA…YGSN, LREA…LNKL, EREE…HNMA, and IDDI…GAID. 19 residues coordinate Ca(2+): D388, D390, S392, E399, D424, D426, S428, T430, E435, D460, D462, S464, Y466, E471, D494, D496, D498, R500, and E505. The segment at 526 to 545 is disordered; it reads GRPTTATSDDPSPTISSSSR. The span at 528 to 545 shows a compositional bias: low complexity; that stretch reads PTTATSDDPSPTISSSSR.

It belongs to the protein kinase superfamily. Ser/Thr protein kinase family. CDPK subfamily.

The protein localises to the membrane. It catalyses the reaction L-seryl-[protein] + ATP = O-phospho-L-seryl-[protein] + ADP + H(+). It carries out the reaction L-threonyl-[protein] + ATP = O-phospho-L-threonyl-[protein] + ADP + H(+). Its activity is regulated as follows. Activated by calcium. Autophosphorylation may play an important role in the regulation of the kinase activity. May play a role in signal transduction pathways that involve calcium as a second messenger. The chain is Calcium-dependent protein kinase 6 from Oryza sativa subsp. japonica (Rice).